The following is a 226-amino-acid chain: ATP synthase subunit a (226 aa).

6 consecutive transmembrane segments (helical) span residues 18–38 (FITG…SLGA), 79–99 (LAGT…IPGF), 105–125 (SWSF…FEGI), 134–154 (FAHF…IEII), 179–199 (LIML…VLFF), and 201–221 (GILQ…GAVL).

This sequence belongs to the ATPase A chain family. As to quaternary structure, F-type ATPases have 2 components, CF(1) - the catalytic core - and CF(0) - the membrane proton channel. CF(1) has five subunits: alpha(3), beta(3), gamma(1), delta(1), epsilon(1). CF(0) has three main subunits: a(1), b(2) and c(9-12). The alpha and beta chains form an alternating ring which encloses part of the gamma chain. CF(1) is attached to CF(0) by a central stalk formed by the gamma and epsilon chains, while a peripheral stalk is formed by the delta and b chains.

The protein localises to the cell inner membrane. In terms of biological role, key component of the proton channel; it plays a direct role in the translocation of protons across the membrane. The protein is ATP synthase subunit a of Helicobacter pylori (strain HPAG1).